We begin with the raw amino-acid sequence, 254 residues long: 5'-nucleotidase SurE (254 aa).

The a divalent metal cation site is built by D8, D9, S40, and N93.

This sequence belongs to the SurE nucleotidase family. Requires a divalent metal cation as cofactor.

The protein localises to the cytoplasm. It carries out the reaction a ribonucleoside 5'-phosphate + H2O = a ribonucleoside + phosphate. Nucleotidase that shows phosphatase activity on nucleoside 5'-monophosphates. In Methylorubrum extorquens (strain CM4 / NCIMB 13688) (Methylobacterium extorquens), this protein is 5'-nucleotidase SurE.